An 85-amino-acid chain; its full sequence is MNLYESCVRGALRAYKLTLSPLIGRQCRFFPTCSEYAAEALIGHGPVRGSWLTVRRLCRCHPWGPSGWDPPPPPRRKGAKWTCET.

Belongs to the UPF0161 family.

Its subcellular location is the cell inner membrane. In terms of biological role, could be involved in insertion of integral membrane proteins into the membrane. The sequence is that of Putative membrane protein insertion efficiency factor from Phenylobacterium zucineum (strain HLK1).